A 355-amino-acid chain; its full sequence is MRDRFLRACRRQPVDRTPIWLMRQAGRYMPEYRAIRERYGFLQMVKTPEVAAEVTLQPVQAFGVDAAIIFADILPPLEGLGLQLTYEKGEGPVIHNPIRSPHDVSVLRSCDPRETVAYTLAALQLVKRELNGLPLIGFSGAPFTLASYAIEGGGSREYRLTKRFMYEQPAAWHDLMERLSRLVADYLIAQIEAGADAVQIFDSWAGALSPADYRAYVLRHTQALVQTIRARLGDVTPPIIYFGTDMAGLAGEVRQIGADVLGVDWRIDLDVAWAQYGFNHAVQGNLDPMTLFAPPSIIAARARDILERAGGRPGHIFNLGHGILTETPVDHVRYLVEFVQSYPLPATAPVLQEVV.

Residues 23–27, D72, Y148, S203, and H321 contribute to the substrate site; that span reads RQAGR.

It belongs to the uroporphyrinogen decarboxylase family. In terms of assembly, homodimer.

It is found in the cytoplasm. The enzyme catalyses uroporphyrinogen III + 4 H(+) = coproporphyrinogen III + 4 CO2. It participates in porphyrin-containing compound metabolism; protoporphyrin-IX biosynthesis; coproporphyrinogen-III from 5-aminolevulinate: step 4/4. Its function is as follows. Catalyzes the decarboxylation of four acetate groups of uroporphyrinogen-III to yield coproporphyrinogen-III. The sequence is that of Uroporphyrinogen decarboxylase from Chloroflexus aurantiacus (strain ATCC 29366 / DSM 635 / J-10-fl).